The following is a 520-amino-acid chain: FNIP repeat-containing protein DDB_G0274063/DDB_G0272642 (520 aa).

Disordered regions lie at residues 47 to 86 (QQQSNNNNNNNNNNNNNNNNNNFINFSNHTNNINNNIDNR) and 100 to 121 (NISSSSPYTLTSTPSSSSSSSS). The span at 51 to 84 (NNNNNNNNNNNNNNNNNNFINFSNHTNNINNNID) shows a compositional bias: low complexity. 4 FNIP repeats span residues 242–285 (YNNN…FGES), 286–331 (FNQD…FGLS), 332–406 (YNQP…FGVQ), and 453–496 (FNQQ…FHNS).

This is FNIP repeat-containing protein DDB_G0274063/DDB_G0272642 from Dictyostelium discoideum (Social amoeba).